The chain runs to 325 residues: Ribosomal RNA small subunit methyltransferase C (325 aa).

The protein belongs to the methyltransferase superfamily. RsmC family. In terms of assembly, monomer.

It is found in the cytoplasm. It catalyses the reaction guanosine(1207) in 16S rRNA + S-adenosyl-L-methionine = N(2)-methylguanosine(1207) in 16S rRNA + S-adenosyl-L-homocysteine + H(+). Specifically methylates the guanine in position 1207 of 16S rRNA in the 30S particle. The chain is Ribosomal RNA small subunit methyltransferase C from Alcanivorax borkumensis (strain ATCC 700651 / DSM 11573 / NCIMB 13689 / SK2).